A 77-amino-acid chain; its full sequence is Putative membrane protein insertion efficiency factor (77 aa).

It belongs to the UPF0161 family.

The protein resides in the cell membrane. In terms of biological role, could be involved in insertion of integral membrane proteins into the membrane. This Geobacillus sp. (strain WCH70) protein is Putative membrane protein insertion efficiency factor.